Consider the following 640-residue polypeptide: uncharacterized protein (640 aa).

The region spanning 184–328 is the TIR domain; the sequence is VKRDTIFIIK…KVQRSIDTMI (145 aa). Positions 613–640 are disordered; that stretch reads LPNDLDDEDEELDDSTLGRPDSDEEGGE. A compositionally biased stretch (acidic residues) spans 616-626; it reads DLDDEDEELDD.

This is an uncharacterized protein from Sinorhizobium fredii (strain NBRC 101917 / NGR234).